The sequence spans 377 residues: Flagellar P-ring protein (377 aa).

The first 30 residues, 1-30 (MLARFLSSLLKASVTALAVVVAFGFAANFA), serve as a signal peptide directing secretion.

It belongs to the FlgI family. In terms of assembly, the basal body constitutes a major portion of the flagellar organelle and consists of four rings (L,P,S, and M) mounted on a central rod.

The protein resides in the periplasm. Its subcellular location is the bacterial flagellum basal body. Its function is as follows. Assembles around the rod to form the L-ring and probably protects the motor/basal body from shearing forces during rotation. The protein is Flagellar P-ring protein of Cupriavidus pinatubonensis (strain JMP 134 / LMG 1197) (Cupriavidus necator (strain JMP 134)).